The primary structure comprises 639 residues: Chaperone protein DnaK (639 aa).

At threonine 198 the chain carries Phosphothreonine; by autocatalysis. A disordered region spans residues 605 to 624 (SQAQGGAETNAGKQANAAAD).

It belongs to the heat shock protein 70 family.

In terms of biological role, acts as a chaperone. The polypeptide is Chaperone protein DnaK (Shewanella putrefaciens (strain CN-32 / ATCC BAA-453)).